Consider the following 466-residue polypeptide: 3-isopropylmalate dehydratase large subunit (466 aa).

Residues cysteine 347, cysteine 407, and cysteine 410 each coordinate [4Fe-4S] cluster.

Belongs to the aconitase/IPM isomerase family. LeuC type 1 subfamily. Heterodimer of LeuC and LeuD. Requires [4Fe-4S] cluster as cofactor.

The enzyme catalyses (2R,3S)-3-isopropylmalate = (2S)-2-isopropylmalate. It functions in the pathway amino-acid biosynthesis; L-leucine biosynthesis; L-leucine from 3-methyl-2-oxobutanoate: step 2/4. In terms of biological role, catalyzes the isomerization between 2-isopropylmalate and 3-isopropylmalate, via the formation of 2-isopropylmaleate. The protein is 3-isopropylmalate dehydratase large subunit of Klebsiella pneumoniae (strain 342).